Reading from the N-terminus, the 637-residue chain is Extracellular metalloproteinase 2 (637 aa).

Residues 1-20 (MRSFLLASLASVATLKSAQA) form the signal peptide. A propeptide spanning residues 21–244 (HPAHSTRGLS…VHAVVDYSAD (224 aa)) is cleaved from the precursor. 4 N-linked (GlcNAc...) asparagine glycosylation sites follow: Asn-302, Asn-328, Asn-337, and Asn-413. His-430 lines the Zn(2+) pocket. Glu-431 is a catalytic residue. His-434 is a Zn(2+) binding site.

It belongs to the peptidase M36 family. The cofactor is Zn(2+).

Its subcellular location is the secreted. Secreted metalloproteinase that allows assimilation of proteinaceous substrates. The sequence is that of Extracellular metalloproteinase 2 (MEP2) from Phaeosphaeria nodorum (strain SN15 / ATCC MYA-4574 / FGSC 10173) (Glume blotch fungus).